A 313-amino-acid chain; its full sequence is Mas-related G-protein coupled receptor member A4 (313 aa).

Residues 1–25 (MAPTTTNPMNETIPGSIDIETLIPN) are Extracellular-facing. Asparagine 10 carries an N-linked (GlcNAc...) asparagine glycan. Residues 26–46 (LMIIIFGLVGLTGNVILFWLL) form a helical membrane-spanning segment. The Cytoplasmic portion of the chain corresponds to 47–54 (GFHLHRNA). Residues 55–75 (FLVYILNLALADFLFLLCHII) traverse the membrane as a helical segment. A glycan (N-linked (GlcNAc...) asparagine) is linked at asparagine 76. Over 76 to 93 (NSTMLLLKVHLPNNILNH) the chain is Extracellular. Residues 94–114 (CFDIIMTVLYITGLSMLSAIS) traverse the membrane as a helical segment. At 115–137 (TERCLSVLCPIWYRCRRPEHTST) the chain is on the cytoplasmic side. A helical transmembrane segment spans residues 138–158 (VLCAVIWFLPLLICILNGYFC). At 159–182 (HFFGPKYVIDSVCLATNFFIRTYP) the chain is on the extracellular side. A helical membrane pass occupies residues 183-203 (MFLFIVLCLSTLALLARLFCG). Residues 204–219 (AGKTKFTRLFVTIMLT) lie on the Cytoplasmic side of the membrane. Residues 220 to 240 (VLVFLLCGLPLGFFWFLVPWI) form a helical membrane-spanning segment. Residues 241 to 255 (NRDFSVLDYILFQTS) are Extracellular-facing. Residues 256–276 (LVLTSVNSCANPIIYFFVGSF) traverse the membrane as a helical segment. Residues 277–313 (RHRLKHKTLKMVLQSALQDTPETPENMVEMSRSKAEP) are Cytoplasmic-facing.

This sequence belongs to the G-protein coupled receptor 1 family. Mas subfamily. As to expression, expressed in a subset of sensory neurons that includes nociceptors. Expressed in the subclass of non-peptidergic sensory neurons that are IB4(+) and VR1(-).

Its subcellular location is the cell membrane. Orphan receptor. May be a receptor for RFamide-family neuropeptides such as NPFF and NPAF, which are analgesic in vivo. May regulate nociceptor function and/or development, including the sensation or modulation of pain. The polypeptide is Mas-related G-protein coupled receptor member A4 (Mrgpra4) (Mus musculus (Mouse)).